Here is an 81-residue protein sequence, read N- to C-terminus: Sulfur carrier protein TusA (81 aa).

The active-site Cysteine persulfide intermediate is the Cys-19.

This sequence belongs to the sulfur carrier protein TusA family.

It is found in the cytoplasm. Its function is as follows. Sulfur carrier protein which probably makes part of a sulfur-relay system. The chain is Sulfur carrier protein TusA from Shewanella oneidensis (strain ATCC 700550 / JCM 31522 / CIP 106686 / LMG 19005 / NCIMB 14063 / MR-1).